A 196-amino-acid polypeptide reads, in one-letter code: DnaA initiator-associating protein DiaA (196 aa).

An SIS domain is found at 34 to 196 (LVHSLLNGNK…DNTLFPHQDD (163 aa)).

It belongs to the SIS family. DiaA subfamily. Homotetramer; dimer of dimers.

In terms of biological role, required for the timely initiation of chromosomal replication via direct interactions with the DnaA initiator protein. This Citrobacter koseri (strain ATCC BAA-895 / CDC 4225-83 / SGSC4696) protein is DnaA initiator-associating protein DiaA.